Reading from the N-terminus, the 1376-residue chain is MAERANLVFHNKVIDGTAIKRLISRLIDHFGMAYTSHILDQVKTLGFQQATATSISLGIDDLLTIPSKGWLVQDAEQQSWILEKHHHYGNVHAVEKLRQSIEIWYATSEYLRQEMNPNFRMTDPFNPVHMMSFSGARGNASQVHQLVGMRGLMSDPQGQMIDLPIQSNLREGLSLTEYIISCYGARKGVVDTAVRTSDAGYLTRRLVEVVQHIVVRRTDCGTIRGISVSPRNKNRMMSERIFIQTLIGRVLADDIYIGSRCVAFRNQDLGIGLVNRLITFGTQSISIRTPFTCRSTSWICRLCYGRSPTHGDLVELGEAVGIIAGQSIGEPGTQLTLRTFHTGGVFTGGTAEHVRAPYNGKIKFNEDLVHPTRTRHGHPAFLCYIDLSVIIESEDIIHSVTIPPKSFLLVQNDQYVESEQVIAEIREGTYTFHFKERVRKYIYSDSEGEMHWSTDVSHAPEFTYSNVHLLPKTSHLWILSGGSCGSSLIRFSIHKDQDQMNIPFLSAERKSISSLSVNNDQVSQKFFSSDFADPKKLGIYDYSELNGNLGTSHYNLIYSAIFHENSDLLAKRRRNRFLIPFQSIQEQEKEFIPQSGISVEIPINGIFRRNSIFAFFDDPRYRRKSSGILKYGTLKADSIIQKEDMIEYRGVQKIKTKYEMKVDRFFFIPEEVHILPESSAIMVQNYSIIGVDTRLTLNIRSQVGGLIRVEKKKKRIELKIFSGDIHFPDKTDKISRHSGILIPPGRGKKNSKESKKFKNWIYVQRITPTKKKFFVLVRPVATYEIADSINLATLFPQDLFREKDNIQLRVFNYILYGNGKPTRGISDTSIQLVRTCLVLNWDKNSSLEEVRAFFVEVSTKGLIQDFIRIGLVKSHISYIRKRNNSPDSGLISADHMNPFYSISPKSGILQQSLRQNHGTIRMFLNRNKESQSLLILSSSNCFRMGPFNHVKHHNVINQSIKKNTLITIKNSSGPLGTATPISNFYSFLPLLTYNQISLIKYFQLDNLKYIFQKINSYLIDENGIILNLDPYSNVVLNPFKLNWYFLHQNYHHNYCEETSTIISLGQFFCENVCIAKKEPHLKSGQVLIVQRDSAVIRSAKPYLATPGAKVHGHYSEILYEGDTLVTFIYEKSRSGDITQGLPKVEQVLEVRSIDSISLNLEKRIKGWNKCITRILGIPWGFLIGAELTIVQSRISLVNKIQKVYRSQGVQIHNRHIEIIVRQITSKVLVSEEGMSNVFLPGELIGLLRAERTGRALEEAICYRAVLLGITRASLNTQSFISEASFQETARVLAKAALRGRIDWLKGLKENVVLGGVIPAGTGFNKGLVHCSRQHTNIILEKKTKNLALFEGDMRDILFYHREFCDSSISKSDFSRI.

Zn(2+) contacts are provided by cysteine 220, cysteine 293, cysteine 300, and cysteine 303.

This sequence belongs to the RNA polymerase beta' chain family. RpoC2 subfamily. In terms of assembly, in plastids the minimal PEP RNA polymerase catalytic core is composed of four subunits: alpha, beta, beta', and beta''. When a (nuclear-encoded) sigma factor is associated with the core the holoenzyme is formed, which can initiate transcription. Zn(2+) serves as cofactor.

The protein resides in the plastid. The protein localises to the chloroplast. It carries out the reaction RNA(n) + a ribonucleoside 5'-triphosphate = RNA(n+1) + diphosphate. DNA-dependent RNA polymerase catalyzes the transcription of DNA into RNA using the four ribonucleoside triphosphates as substrates. This chain is DNA-directed RNA polymerase subunit beta'', found in Arabidopsis thaliana (Mouse-ear cress).